Consider the following 156-residue polypeptide: 3-hydroxyacyl-[acyl-carrier-protein] dehydratase FabZ (156 aa).

H62 is a catalytic residue.

This sequence belongs to the thioester dehydratase family. FabZ subfamily.

It is found in the cytoplasm. The enzyme catalyses a (3R)-hydroxyacyl-[ACP] = a (2E)-enoyl-[ACP] + H2O. Involved in unsaturated fatty acids biosynthesis. Catalyzes the dehydration of short chain beta-hydroxyacyl-ACPs and long chain saturated and unsaturated beta-hydroxyacyl-ACPs. This chain is 3-hydroxyacyl-[acyl-carrier-protein] dehydratase FabZ, found in Parasynechococcus marenigrum (strain WH8102).